The sequence spans 176 residues: Avian agnoprotein 1a (176 aa).

Disordered regions lie at residues 1–85 and 116–176; these read MSTP…GKLE and VYAA…RPAR. Over residues 75–85 the composition is skewed to basic and acidic residues; the sequence is YDRQNRFGKLE. Residues 76–119 adopt a coiled-coil conformation; it reads DRQNRFGKLESEIRETKSQLETLRQELKHLQADVDDLKETVYAA. Low complexity predominate over residues 137–161; that stretch reads TPTATTPEASPAAPTTESTETTGPS.

Interacts with VP1.

It localises to the virion. The protein localises to the host nucleus. In Budgerigar fledgling disease virus (BFPyV), this protein is Avian agnoprotein 1a.